We begin with the raw amino-acid sequence, 535 residues long: MTKYIFVTGGVVSSLGKGIVAASLGRLLKNRGMSVTIQKFDPYINVDPGTMSPYQHGEVFVTDDGAETDLDLGHYERFIDINLNRFSNVTTGKIYSAVLKKERRGDYLGGTVQVIPHITNELKDRVYRAGKETNADVVITEIGGTVGDIESLPFLEAIRQMKSDIGHENVMYIHCTLVPYIKAAGELKTKPTQHSVKELRSLGIQPNIIVVRTEMPISQDMKDKIALFCDIDTKAVIECEDADNLYSIPLNLQEQGLDKLVCDHMKLECKDPDMTEWKDLVTKVKNLSKTITISLVGKYVELQDAYISVVESLRHAGYAFDADVKIKWINAEEVTESNIQELTGGTDGIIVPGGFGDRGVEGKIIAAKYARENKIPFFGICLGMQIASIEYARNVLGLEGAHSAEIDPSTPYPIIDLLPEQKDVEDLGGTLRLGLYPCKLQEDTKAFEAYADEVVYERHRHRYEFNNEYRQQMEENGFVFSGTSPDGRLVEIIELKDHPWYVACQFHPEFKSRPTRPQPLFKDFIGASVQAAEQK.

The amidoligase domain stretch occupies residues 1 to 267 (MTKYIFVTGG…DKLVCDHMKL (267 aa)). Serine 13 lines the CTP pocket. Serine 13 provides a ligand contact to UTP. Residue 14-19 (SLGKGI) coordinates ATP. Residue tyrosine 54 coordinates L-glutamine. Aspartate 71 contributes to the ATP binding site. 2 residues coordinate Mg(2+): aspartate 71 and glutamate 141. Residues 148–150 (DIE), 188–193 (KTKPTQ), and lysine 224 contribute to the CTP site. UTP is bound by residues 188–193 (KTKPTQ) and lysine 224. The Glutamine amidotransferase type-1 domain occupies 292-534 (TISLVGKYVE…IGASVQAAEQ (243 aa)). Residue glycine 354 participates in L-glutamine binding. Catalysis depends on cysteine 381, which acts as the Nucleophile; for glutamine hydrolysis. L-glutamine is bound by residues 382 to 385 (LGMQ), glutamate 405, and arginine 462. Catalysis depends on residues histidine 507 and glutamate 509.

This sequence belongs to the CTP synthase family. As to quaternary structure, homotetramer.

It carries out the reaction UTP + L-glutamine + ATP + H2O = CTP + L-glutamate + ADP + phosphate + 2 H(+). The enzyme catalyses L-glutamine + H2O = L-glutamate + NH4(+). The catalysed reaction is UTP + NH4(+) + ATP = CTP + ADP + phosphate + 2 H(+). It functions in the pathway pyrimidine metabolism; CTP biosynthesis via de novo pathway; CTP from UDP: step 2/2. With respect to regulation, allosterically activated by GTP, when glutamine is the substrate; GTP has no effect on the reaction when ammonia is the substrate. The allosteric effector GTP functions by stabilizing the protein conformation that binds the tetrahedral intermediate(s) formed during glutamine hydrolysis. Inhibited by the product CTP, via allosteric rather than competitive inhibition. In terms of biological role, catalyzes the ATP-dependent amination of UTP to CTP with either L-glutamine or ammonia as the source of nitrogen. Regulates intracellular CTP levels through interactions with the four ribonucleotide triphosphates. This chain is CTP synthase, found in Bacillus velezensis (strain DSM 23117 / BGSC 10A6 / LMG 26770 / FZB42) (Bacillus amyloliquefaciens subsp. plantarum).